A 116-amino-acid polypeptide reads, in one-letter code: Nicotine metabolites export pump subunit NepA (116 aa).

4 helical membrane-spanning segments follow: residues 10–30 (LTIWPLLLLAIAAEVAATSLL), 42–62 (TVAVACLYTVAFALLAQILKF), 67–87 (IAYALWAGLGTASVAVIGVLF), and 92–112 (FSWKHAIGLALVVTGVVTLNL).

The protein belongs to the drug/metabolite transporter (DMT) superfamily. Small multidrug resistance (SMR) (TC 2.A.7.1) family. NepA/NepB subfamily. In terms of assembly, the efflux pump is composed of NepA and NepB.

Its subcellular location is the cell membrane. Functionally, component of an efflux pump responsible for the transport of nicotine breakdown products, in particular methylamine, out of the cell. This pump apparently serves as a metabolic valve for nicotine catabolites and may protect the bacteria from the potentially toxic side effects of these compounds. The polypeptide is Nicotine metabolites export pump subunit NepA (nepA) (Paenarthrobacter nicotinovorans (Arthrobacter nicotinovorans)).